Reading from the N-terminus, the 881-residue chain is Leucine--tRNA ligase (881 aa).

The 'HIGH' region motif lies at 48–58; that stretch reads PYPSGKLHMGH. A 'KMSKS' region motif is present at residues 638–642; sequence KMSKS. Residue Lys-641 coordinates ATP.

The protein belongs to the class-I aminoacyl-tRNA synthetase family.

Its subcellular location is the cytoplasm. It catalyses the reaction tRNA(Leu) + L-leucine + ATP = L-leucyl-tRNA(Leu) + AMP + diphosphate. The protein is Leucine--tRNA ligase of Janthinobacterium sp. (strain Marseille) (Minibacterium massiliensis).